The chain runs to 512 residues: MSEIREARLQKANSLVSKGFASYAESFSVSHTTKFLIQKFDYLENGQEEDFSVSLAGRVMAKRVMGKIAFFTISDQEGQIQLYLDKRMINCNLENQKLLSFEDIKEIVDIGDWIGVYGTIKKTNKGELSIKVEKWEMLSKSLQPLPDKWHGLTDIEKRYRQRYLDLIVNPHSKNVFKTRAKCISFIRQWLDNRNFLEIETPILQSEAGGAEARPFITHHNTLDIPLYLRIATELHLKRMVVGGFEKVYELGRIFRNEGISTKHNPEFTSVEIYQAFSNYVDMMNLTEELIKDIVFNVCGSLVINYQNKEIDFSKPWSRISMKDIVKKYTGIDFDSFSGDFQSAKQAVKSINVEFSNKVNSMGRLLNEVFEQKVESELIEPTFVIDYPVEISPLARPHLDNKEMVQRFELFIVGRELANAFSELIDPVDQRERMQLQQSLRDEGDHEAHCIDEDFLNALEIGMPPTGGLGIGIDRLIMLITNSPSIRDVIPFPLLKPEITSNKNEKLPLNEVK.

2 residues coordinate Mg(2+): Glu-408 and Glu-415.

This sequence belongs to the class-II aminoacyl-tRNA synthetase family. Homodimer. It depends on Mg(2+) as a cofactor.

The protein resides in the cytoplasm. It catalyses the reaction tRNA(Lys) + L-lysine + ATP = L-lysyl-tRNA(Lys) + AMP + diphosphate. The sequence is that of Lysine--tRNA ligase from Prochlorococcus marinus (strain MIT 9312).